Consider the following 629-residue polypeptide: Sushi domain-containing protein 5 (629 aa).

The N-terminal stretch at 1 to 35 is a signal peptide; it reads MTAEGPSPPARWHRRLPGLWAAALLLLGLPRLSVR. Over 36 to 574 the chain is Extracellular; that stretch reads ADGKFFVLES…DGCPGLSRGP (539 aa). Positions 39–134 constitute a Link domain; that stretch reads KFFVLESQNG…GGTYSALCIK (96 aa). Disulfide bonds link C61–C132, C140–C184, and C167–C197. Residues 138 to 199 form the Sushi domain; sequence KPCGDPPSFP…WYGLVQACGK (62 aa). The segment covering 225 to 249 has biased composition (basic and acidic residues); it reads EDSRTEADEDRGQGDSSEEAPKQDR. 2 disordered regions span residues 225–252 and 344–403; these read EDSR…RLVS and DGPS…GLDE. Residues 575–595 form a helical membrane-spanning segment; it reads VIATIVTVLCLLLLLAGVGMV. Residues 596-629 lie on the Cytoplasmic side of the membrane; that stretch reads WGYRKCQHKSSVYKLNVGQRQARHYHQQIEMEKV.

It is found in the membrane. This chain is Sushi domain-containing protein 5 (SUSD5), found in Homo sapiens (Human).